A 143-amino-acid polypeptide reads, in one-letter code: MFKTYTAAPASVEREWYVIDADGKTLGRLATEVARRLRGKHKPEFTPNIDTGDYVIVINADKIGVTGRKEQDKIYYHHTGYVGSMKSANFSQMQQRNPGRVLEIAVKGMLPKGPLGRAQLKKLKIYAGSEHEHSAQQPTALEI.

This sequence belongs to the universal ribosomal protein uL13 family. In terms of assembly, part of the 50S ribosomal subunit.

Its function is as follows. This protein is one of the early assembly proteins of the 50S ribosomal subunit, although it is not seen to bind rRNA by itself. It is important during the early stages of 50S assembly. This chain is Large ribosomal subunit protein uL13, found in Dichelobacter nodosus (strain VCS1703A).